The primary structure comprises 299 residues: RING-H2 finger protein ATL20 (299 aa).

A helical membrane pass occupies residues 172–192 (LIITLCIIGGITATCIAAIRI). The RING-type; atypical zinc finger occupies 253–295 (CPICLSEYASKETVRCMPECDHCFHVQCIDEWLKIHSSCPVCR).

The protein belongs to the RING-type zinc finger family. ATL subfamily.

It is found in the membrane. It carries out the reaction S-ubiquitinyl-[E2 ubiquitin-conjugating enzyme]-L-cysteine + [acceptor protein]-L-lysine = [E2 ubiquitin-conjugating enzyme]-L-cysteine + N(6)-ubiquitinyl-[acceptor protein]-L-lysine.. It participates in protein modification; protein ubiquitination. The sequence is that of RING-H2 finger protein ATL20 (ATL20) from Arabidopsis thaliana (Mouse-ear cress).